We begin with the raw amino-acid sequence, 502 residues long: Mannitol 2-dehydrogenase (502 aa).

Residue 37 to 48 (IVHIGVGGFHRA) coordinates NAD(+).

The protein belongs to the mannitol dehydrogenase family. Monomer.

The enzyme catalyses D-mannitol + NAD(+) = D-fructose + NADH + H(+). Catalyzes the NAD(H)-dependent interconversion of D-fructose and D-mannitol in the mannitol metabolic pathway. The chain is Mannitol 2-dehydrogenase from Aspergillus fumigatus (strain CBS 144.89 / FGSC A1163 / CEA10) (Neosartorya fumigata).